An 89-amino-acid polypeptide reads, in one-letter code: Protein S100-A8 (89 aa).

EF-hand domains follow at residues 13 to 48 and 46 to 81; these read IDVY…FVQN and VQNI…VGVA. Residues histidine 17 and histidine 27 each coordinate Zn(2+). Aspartate 33 contributes to the Ca(2+) binding site. Cysteine 42 bears the S-nitrosocysteine mark. Ca(2+) contacts are provided by aspartate 59, asparagine 61, aspartate 63, and glutamate 70. Residue histidine 83 coordinates Zn(2+).

It belongs to the S-100 family. As to quaternary structure, homodimer. Preferentially exists as a heterodimer or heterotetramer with S100A9 known as calprotectin (S100A8/A9). Calprotectin (S100A8/9) interacts with CEACAM3 and tubulin filaments in a calcium-dependent manner. Heterotetrameric calprotectin (S100A8/A9) interacts with ANXA6 and associates with tubulin filaments in activated monocytes. S100A8 and calprotectin (S100A8/9) interact with NCF2/P67PHOX, RAC1 and RAC2. Calprotectin (S100A8/9) interacts with CYBA and CYBB. S100A8 interacts with AGER, ATP2A2 and with the heterodimeric complex formed by TLR4 and LY96. Calprotectin (S100A8/9) interacts with NOS2 to form the iNOS-S100A8/A9 transnitrosylase complex. Calprotectin (S100A8/9) interacts with CD69.

Its subcellular location is the secreted. It is found in the cytoplasm. The protein resides in the cytoskeleton. It localises to the cell membrane. Calprotectin (S100A8/A9) activity on TLR4 signaling is inhibited by paquinimod. S100A8 is a calcium- and zinc-binding protein which plays a prominent role in the regulation of inflammatory processes and immune response. It can induce neutrophil chemotaxis and adhesion. Predominantly found as calprotectin (S100A8/A9) which has a wide plethora of intra- and extracellular functions. The intracellular functions include: facilitating leukocyte arachidonic acid trafficking and metabolism, modulation of the tubulin-dependent cytoskeleton during migration of phagocytes and activation of the neutrophilic NADPH-oxidase. Also participates in regulatory T-cell differentiation together with CD69. Activates NADPH-oxidase by facilitating the enzyme complex assembly at the cell membrane, transferring arachidonic acid, an essential cofactor, to the enzyme complex and S100A8 contributes to the enzyme assembly by directly binding to NCF2/P67PHOX. The extracellular functions involve pro-inflammatory, antimicrobial, oxidant-scavenging and apoptosis-inducing activities. Its pro-inflammatory activity includes recruitment of leukocytes, promotion of cytokine and chemokine production, and regulation of leukocyte adhesion and migration. Acts as an alarmin or a danger associated molecular pattern (DAMP) molecule and stimulates innate immune cells via binding to pattern recognition receptors such as Toll-like receptor 4 (TLR4) and receptor for advanced glycation endproducts (AGER). Binding to TLR4 and AGER activates the MAP-kinase and NF-kappa-B signaling pathways resulting in the amplification of the pro-inflammatory cascade. Has antimicrobial activity towards bacteria and fungi and exerts its antimicrobial activity probably via chelation of Zn(2+) which is essential for microbial growth. Can induce cell death via autophagy and apoptosis and this occurs through the cross-talk of mitochondria and lysosomes via reactive oxygen species (ROS) and the process involves BNIP3. Can regulate neutrophil number and apoptosis by an anti-apoptotic effect; regulates cell survival via ITGAM/ITGB and TLR4 and a signaling mechanism involving MEK-ERK. Its role as an oxidant scavenger has a protective role in preventing exaggerated tissue damage by scavenging oxidants. The iNOS-S100A8/A9 transnitrosylase complex is proposed to direct selective inflammatory stimulus-dependent S-nitrosylation of multiple targets such as GAPDH, ANXA5, EZR, MSN and VIM by recognizing a [IL]-x-C-x-x-[DE] motif; S100A8 seems to contribute to S-nitrosylation site selectivity. In terms of biological role, (Microbial infection) Upon infection by murine coronavirus (MHV-A59), induces expansion of aberrant immature neutrophils in a TLR4-dependent manner. The chain is Protein S100-A8 from Mus musculus (Mouse).